The sequence spans 81 residues: Salivary thrombin inhibitor anophelin (81 aa).

A signal peptide spans 1–22 (MANKLFLISLLCVVLVAKIAQA). N-linked (GlcNAc...) asparagine glycosylation is present at Asn-45. The segment at 70–73 (DPGR) is blocks active site cleft of host thrombin in a reverse direction compared to substrates.

This sequence belongs to the anophelin family. Interacts with human F2 (thrombin); the interaction results in thrombin inhibition.

The protein localises to the secreted. Functionally, salivary protein with anticoagulant activity that inhibits host thrombin (F2). The sequence is that of Salivary thrombin inhibitor anophelin from Anopheles darlingi (Mosquito).